A 362-amino-acid polypeptide reads, in one-letter code: Phospho-N-acetylmuramoyl-pentapeptide-transferase (362 aa).

The next 10 helical transmembrane spans lie at 28-48, 72-92, 94-114, 131-151, 169-189, 200-220, 236-256, 264-284, 290-310, and 339-359; these read IISF…VITW, TPTM…MVCA, LSNI…ILGL, VLHK…IIFM, FMPQ…VGTS, GLAI…AWIS, FSGE…GFLW, IFMG…IAVL, LLLI…LQVI, and IIVR…ITLK.

The protein belongs to the glycosyltransferase 4 family. MraY subfamily. It depends on Mg(2+) as a cofactor.

It localises to the cell inner membrane. It carries out the reaction UDP-N-acetyl-alpha-D-muramoyl-L-alanyl-gamma-D-glutamyl-meso-2,6-diaminopimeloyl-D-alanyl-D-alanine + di-trans,octa-cis-undecaprenyl phosphate = di-trans,octa-cis-undecaprenyl diphospho-N-acetyl-alpha-D-muramoyl-L-alanyl-D-glutamyl-meso-2,6-diaminopimeloyl-D-alanyl-D-alanine + UMP. It participates in cell wall biogenesis; peptidoglycan biosynthesis. Functionally, catalyzes the initial step of the lipid cycle reactions in the biosynthesis of the cell wall peptidoglycan: transfers peptidoglycan precursor phospho-MurNAc-pentapeptide from UDP-MurNAc-pentapeptide onto the lipid carrier undecaprenyl phosphate, yielding undecaprenyl-pyrophosphoryl-MurNAc-pentapeptide, known as lipid I. The protein is Phospho-N-acetylmuramoyl-pentapeptide-transferase of Blochmanniella pennsylvanica (strain BPEN).